The chain runs to 264 residues: Apolipoprotein A-I (264 aa).

The first 18 residues, 1–18 (MKAVVLAVAVLFLTGSQA), serve as a signal peptide directing secretion. 2 repeat units span residues 67-88 (LNLL…EQLG) and 89-110 (PVTR…QEMN). The interval 67-264 (LNLLENWDTF…DEATQKLNTQ (198 aa)) is 10 X approximate tandem repeats. Residue Met109 is modified to Methionine sulfoxide. One copy of the 3; half-length repeat lies at 111–121 (KDLEEVKQKVQ). 3 consecutive repeat copies span residues 122–143 (PYLD…PKVE), 144–165 (PLGA…KQLV), and 166–187 (PLGE…TKLA). Residues 188–207 (PYSDQMRDRLAERLTALRDN) form a 7; truncated repeat. Position 193 is a methionine sulfoxide (Met193). Residues 208–229 (PKLAEYHARATEHLKKLGEKTK) form repeat 8. Residues 230–240 (PTLEDLRQGLM) form a 9; half-length repeat. Met240 carries the methionine sulfoxide modification. Residues 241–264 (PWLESLKAKALSVLDEATQKLNTQ) form repeat 10.

Belongs to the apolipoprotein A1/A4/E family. As to quaternary structure, homodimer. Interacts with APOA1BP and CLU. Component of a sperm activating protein complex (SPAP), consisting of APOA1, an immunoglobulin heavy chain, an immunoglobulin light chain and albumin. Interacts with NDRG1. Interacts with SCGB3A2. Interacts with NAXE and YJEFN3. Glycosylated. In terms of processing, palmitoylated. Post-translationally, phosphorylation sites are present in the extracellular medium.

It is found in the secreted. Its function is as follows. Participates in the reverse transport of cholesterol from tissues to the liver for excretion by promoting cholesterol efflux from tissues and by acting as a cofactor for the lecithin cholesterol acyltransferase (LCAT). As part of the SPAP complex, activates spermatozoa motility. The polypeptide is Apolipoprotein A-I (Apoa1) (Nannospalax galili (Northern Israeli blind subterranean mole rat)).